The primary structure comprises 540 residues: NADH-quinone oxidoreductase subunit N 1 (540 aa).

A run of 13 helical transmembrane segments spans residues 11-31, 52-72, 109-129, 142-162, 195-215, 250-270, 284-306, 324-344, 352-372, 386-406, 431-451, 464-486, and 508-528; these read ILPE…DVLT, AVGL…LFTV, FTMI…LLAM, ALLI…EFIL, FLFG…TYGF, LILG…VVPF, PVTA…RLLT, WTSI…LAAL, LLAY…LLWA, LIYY…VLAV, LMMT…GFWA, AVPL…LRFL, and AAII…NLIW.

The protein belongs to the complex I subunit 2 family. As to quaternary structure, NDH-1 is composed of 14 different subunits. Subunits NuoA, H, J, K, L, M, N constitute the membrane sector of the complex.

The protein resides in the cell membrane. The catalysed reaction is a quinone + NADH + 5 H(+)(in) = a quinol + NAD(+) + 4 H(+)(out). NDH-1 shuttles electrons from NADH, via FMN and iron-sulfur (Fe-S) centers, to quinones in the respiratory chain. The immediate electron acceptor for the enzyme in this species is believed to be ubiquinone. Couples the redox reaction to proton translocation (for every two electrons transferred, four hydrogen ions are translocated across the cytoplasmic membrane), and thus conserves the redox energy in a proton gradient. The sequence is that of NADH-quinone oxidoreductase subunit N 1 from Roseiflexus castenholzii (strain DSM 13941 / HLO8).